The primary structure comprises 159 residues: Heterocyst differentiation protein HetP (159 aa).

A required to complement a hetP deletion region spans residues 1 to 50 (MNQNTTGITNYNKAINPQQFDKVVEAILAGKYSWACVLMLRFAGYNPMHY).

It belongs to the HetP family. In bacterial two-hybrid assays interacts weakly with Asl1930, Alr2902 and Alr3234.

Functionally, promotes heterocyst differentiation and commitment when nitrogen is limiting. Interplay between the 4 HetP paralogs controls the timing of commitment to heterocyst formation and its duration. Epistatic analysis show that the 3 paralogs act upstream of hetP to delay commitment (asl1930, alr3234) or inhibit development (alr2902). Asl1930 and Alr3234 must also attenuate the activity of Alr2902. Required for heterocyst formation. Functions directly downstream of master regulator HetR to promote heterocyst differentiation, functioning downstream of patterning (cell choice). Partially functionally redundant with homologs alr2902 and asl1930 but not alr3234. Overexpression leads to more than wild-type levels of heterocysts. Overexpression in the absence of hetR partially bypasses hetR deletion, allowing differentiation of heterocysts, although they only fix nitrogen in the absence of oxygen (a Fox- Fix+ phenotype), suggesting they are not fully. In Nostoc sp. (strain PCC 7120 / SAG 25.82 / UTEX 2576), this protein is Heterocyst differentiation protein HetP.